The sequence spans 122 residues: Large ribosomal subunit protein uL14 (122 aa).

This sequence belongs to the universal ribosomal protein uL14 family. Part of the 50S ribosomal subunit. Forms a cluster with proteins L3 and L19. In the 70S ribosome, L14 and L19 interact and together make contacts with the 16S rRNA in bridges B5 and B8.

Its function is as follows. Binds to 23S rRNA. Forms part of two intersubunit bridges in the 70S ribosome. In Sulfurovum sp. (strain NBC37-1), this protein is Large ribosomal subunit protein uL14.